The following is a 300-amino-acid chain: NAD kinase (300 aa).

The active-site Proton acceptor is the Asp75. NAD(+) is bound by residues 75–76, 149–150, Arg177, Asp179, 190–195, Ala214, and Gln248; these read DG, ND, and TAYALS.

This sequence belongs to the NAD kinase family. The cofactor is a divalent metal cation.

Its subcellular location is the cytoplasm. The enzyme catalyses NAD(+) + ATP = ADP + NADP(+) + H(+). Its function is as follows. Involved in the regulation of the intracellular balance of NAD and NADP, and is a key enzyme in the biosynthesis of NADP. Catalyzes specifically the phosphorylation on 2'-hydroxyl of the adenosine moiety of NAD to yield NADP. In Burkholderia vietnamiensis (strain G4 / LMG 22486) (Burkholderia cepacia (strain R1808)), this protein is NAD kinase.